The following is a 359-amino-acid chain: UDP-N-acetylglucosamine--N-acetylmuramyl-(pentapeptide) pyrophosphoryl-undecaprenol N-acetylglucosamine transferase (359 aa).

UDP-N-acetyl-alpha-D-glucosamine contacts are provided by residues 12–14 (TGG), N124, R163, S191, I245, 264–269 (ALTVAE), and Q290.

This sequence belongs to the glycosyltransferase 28 family. MurG subfamily.

It localises to the cell inner membrane. It carries out the reaction di-trans,octa-cis-undecaprenyl diphospho-N-acetyl-alpha-D-muramoyl-L-alanyl-D-glutamyl-meso-2,6-diaminopimeloyl-D-alanyl-D-alanine + UDP-N-acetyl-alpha-D-glucosamine = di-trans,octa-cis-undecaprenyl diphospho-[N-acetyl-alpha-D-glucosaminyl-(1-&gt;4)]-N-acetyl-alpha-D-muramoyl-L-alanyl-D-glutamyl-meso-2,6-diaminopimeloyl-D-alanyl-D-alanine + UDP + H(+). Its pathway is cell wall biogenesis; peptidoglycan biosynthesis. Cell wall formation. Catalyzes the transfer of a GlcNAc subunit on undecaprenyl-pyrophosphoryl-MurNAc-pentapeptide (lipid intermediate I) to form undecaprenyl-pyrophosphoryl-MurNAc-(pentapeptide)GlcNAc (lipid intermediate II). This chain is UDP-N-acetylglucosamine--N-acetylmuramyl-(pentapeptide) pyrophosphoryl-undecaprenol N-acetylglucosamine transferase, found in Nitrosococcus oceani (strain ATCC 19707 / BCRC 17464 / JCM 30415 / NCIMB 11848 / C-107).